We begin with the raw amino-acid sequence, 179 residues long: uncharacterized protein (179 aa).

A helical transmembrane segment spans residues 5–25; it reads MLAGIGIGVAAALGVAAVASL.

To Rickettsia 17 kDa surface antigen.

The protein resides in the membrane. This is an uncharacterized protein from Escherichia coli O6:H1 (strain CFT073 / ATCC 700928 / UPEC).